A 117-amino-acid polypeptide reads, in one-letter code: Large ribosomal subunit protein uL22c (117 aa).

Belongs to the universal ribosomal protein uL22 family. Part of the 50S ribosomal subunit.

The protein localises to the plastid. Its subcellular location is the chloroplast. Its function is as follows. This protein binds specifically to 23S rRNA. Functionally, the globular domain of the protein is located near the polypeptide exit tunnel on the outside of the subunit, while an extended beta-hairpin is found that lines the wall of the exit tunnel in the center of the 70S ribosome. This Pyropia yezoensis (Susabi-nori) protein is Large ribosomal subunit protein uL22c (rpl22).